The following is a 301-amino-acid chain: Cell division control protein 2 homolog 1 (301 aa).

Positions 5–297 constitute a Protein kinase domain; it reads YQRLEKIGEG…AAQALEHPYF (293 aa). ATP-binding positions include 11–19 and K34; that span reads IGEGSYGVV. S15 bears the Phosphoserine mark. Residue Y16 is modified to Phosphotyrosine. D127 serves as the catalytic Proton acceptor. The residue at position 160 (T160) is a Phosphothreonine; by CAK.

This sequence belongs to the protein kinase superfamily. CMGC Ser/Thr protein kinase family. CDC2/CDKX subfamily. In terms of assembly, forms a stable but non-covalent complex with a regulatory subunit and with a cyclin.

The catalysed reaction is L-seryl-[protein] + ATP = O-phospho-L-seryl-[protein] + ADP + H(+). It carries out the reaction L-threonyl-[protein] + ATP = O-phospho-L-threonyl-[protein] + ADP + H(+). With respect to regulation, phosphorylation at Ser-15 or Tyr-16 inactivates the enzyme, while phosphorylation at Thr-160 activates it. In terms of biological role, probably involved in the control of the cell cycle. In Trypanosoma congolense, this protein is Cell division control protein 2 homolog 1 (CRK1).